Reading from the N-terminus, the 389-residue chain is Alpha carbonic anhydrase 8 (389 aa).

The N-terminal stretch at 1-22 (MKISSLGWVLVLIFISITIVSS) is a signal peptide. The tract at residues 21 to 153 (SSAPAPKPPK…TKGNKGPAKW (133 aa)) is disordered. The segment covering 25–129 (APKPPKPKPA…PKPKPAPKPA (105 aa)) has biased composition (pro residues). Residues 138 to 374 (TEFSYETKGN…VNKRKVYLYK (237 aa)) enclose the Alpha-carbonic anhydrase domain. Residues Cys-163 and Cys-324 are joined by a disulfide bond. Asn-196 carries an N-linked (GlcNAc...) asparagine glycan. The Proton acceptor role is filled by His-204. 3 residues coordinate Zn(2+): His-232, His-234, and His-251. Substrate is bound at residue 320–321 (TA). The N-linked (GlcNAc...) asparagine glycan is linked to Asn-385.

This sequence belongs to the alpha-class carbonic anhydrase family. The cofactor is Zn(2+). N-glycosylated.

It localises to the plastid. It is found in the chloroplast stroma. It catalyses the reaction hydrogencarbonate + H(+) = CO2 + H2O. Reversible hydration of carbon dioxide. The chain is Alpha carbonic anhydrase 8 (ACA8) from Arabidopsis thaliana (Mouse-ear cress).